Consider the following 218-residue polypeptide: Pyridoxine/pyridoxamine 5'-phosphate oxidase (218 aa).

Substrate is bound by residues arginine 14 to tyrosine 17 and lysine 72. FMN is bound by residues arginine 67–lysine 72, tyrosine 82–threonine 83, arginine 88, lysine 89, and glutamine 111. Tyrosine 129, arginine 133, and serine 137 together coordinate substrate. FMN is bound by residues glutamine 146–serine 147 and tryptophan 191. Position 197-199 (arginine 197–histidine 199) interacts with substrate. Arginine 201 contacts FMN.

The protein belongs to the pyridoxamine 5'-phosphate oxidase family. In terms of assembly, homodimer. The cofactor is FMN.

It carries out the reaction pyridoxamine 5'-phosphate + O2 + H2O = pyridoxal 5'-phosphate + H2O2 + NH4(+). The enzyme catalyses pyridoxine 5'-phosphate + O2 = pyridoxal 5'-phosphate + H2O2. It functions in the pathway cofactor metabolism; pyridoxal 5'-phosphate salvage; pyridoxal 5'-phosphate from pyridoxamine 5'-phosphate: step 1/1. Its pathway is cofactor metabolism; pyridoxal 5'-phosphate salvage; pyridoxal 5'-phosphate from pyridoxine 5'-phosphate: step 1/1. Its function is as follows. Catalyzes the oxidation of either pyridoxine 5'-phosphate (PNP) or pyridoxamine 5'-phosphate (PMP) into pyridoxal 5'-phosphate (PLP). The protein is Pyridoxine/pyridoxamine 5'-phosphate oxidase of Klebsiella pneumoniae subsp. pneumoniae (strain ATCC 700721 / MGH 78578).